A 60-amino-acid polypeptide reads, in one-letter code: Metallothionein-like protein EMB30 (60 aa).

This sequence belongs to the metallothionein superfamily. Type 15 family.

Functionally, metallothioneins have a high content of cysteine residues that bind various heavy metals. In Picea glauca (White spruce), this protein is Metallothionein-like protein EMB30 (EMB30).